The primary structure comprises 637 residues: tRNA uridine 5-carboxymethylaminomethyl modification enzyme MnmG (637 aa).

Position 18–23 (18–23 (GAGHAG)) interacts with FAD. 282–296 (GPRYCPSIEDKIVRF) provides a ligand contact to NAD(+).

Belongs to the MnmG family. As to quaternary structure, homodimer. Heterotetramer of two MnmE and two MnmG subunits. FAD is required as a cofactor.

Its subcellular location is the cytoplasm. Its function is as follows. NAD-binding protein involved in the addition of a carboxymethylaminomethyl (cmnm) group at the wobble position (U34) of certain tRNAs, forming tRNA-cmnm(5)s(2)U34. The chain is tRNA uridine 5-carboxymethylaminomethyl modification enzyme MnmG from Pediococcus pentosaceus (strain ATCC 25745 / CCUG 21536 / LMG 10740 / 183-1w).